A 419-amino-acid polypeptide reads, in one-letter code: E3 ubiquitin-protein ligase RNF130 (419 aa).

An N-terminal signal peptide occupies residues 1–27 (MSGAARAGPARLAALALLTCSLWPTRA). Residues 28 to 194 (DNASQEYYTA…MPPKNFSRGS (167 aa)) lie on the Extracellular side of the membrane. N-linked (GlcNAc...) asparagine glycosylation is found at N29, N40, N112, N135, N172, and N189. One can recognise a PA domain in the interval 105-176 (IALLQRGNCT…SYLEKNISVQ (72 aa)). Residues 195-217 (LVFVSISFIVLMIISSAWLIFYF) traverse the membrane as a helical segment. The Cytoplasmic segment spans residues 218–419 (IQKIRYTNAR…SLNANEVEWF (202 aa)). The RING-type zinc finger occupies 264–305 (CAVCIESYKQNDVVRVLPCKHVFHKSCVDPWLSEHCTCPMCK). S341 carries the post-translational modification Phosphoserine.

As to expression, in testis sections, expressed in interstitial tissue and seminiferous tubules. In tubules, expression is mainly in postmeiotic germ cells and to a much lesser extent in Sertoli cells (at protein level). Expressed at high levels in liver, lung, stomach, heart and thymus.

The protein resides in the membrane. It is found in the cytoplasm. It carries out the reaction S-ubiquitinyl-[E2 ubiquitin-conjugating enzyme]-L-cysteine + [acceptor protein]-L-lysine = [E2 ubiquitin-conjugating enzyme]-L-cysteine + N(6)-ubiquitinyl-[acceptor protein]-L-lysine.. It participates in protein modification; protein ubiquitination. Acts as an E3 ubiquitin-protein ligase. May have a role during the programmed cell death of hematopoietic cells. In Rattus norvegicus (Rat), this protein is E3 ubiquitin-protein ligase RNF130.